An 85-amino-acid chain; its full sequence is ATP synthase subunit c (85 aa).

2 helical membrane-spanning segments follow: residues 19-39 (LGAA…IGKI) and 62-82 (IIAA…CLLV).

It belongs to the ATPase C chain family. As to quaternary structure, F-type ATPases have 2 components, F(1) - the catalytic core - and F(0) - the membrane proton channel. F(1) has five subunits: alpha(3), beta(3), gamma(1), delta(1), epsilon(1). F(0) has three main subunits: a(1), b(2) and c(10-14). The alpha and beta chains form an alternating ring which encloses part of the gamma chain. F(1) is attached to F(0) by a central stalk formed by the gamma and epsilon chains, while a peripheral stalk is formed by the delta and b chains.

It is found in the cell inner membrane. F(1)F(0) ATP synthase produces ATP from ADP in the presence of a proton or sodium gradient. F-type ATPases consist of two structural domains, F(1) containing the extramembraneous catalytic core and F(0) containing the membrane proton channel, linked together by a central stalk and a peripheral stalk. During catalysis, ATP synthesis in the catalytic domain of F(1) is coupled via a rotary mechanism of the central stalk subunits to proton translocation. In terms of biological role, key component of the F(0) channel; it plays a direct role in translocation across the membrane. A homomeric c-ring of between 10-14 subunits forms the central stalk rotor element with the F(1) delta and epsilon subunits. The polypeptide is ATP synthase subunit c (Bacteroides fragilis (strain ATCC 25285 / DSM 2151 / CCUG 4856 / JCM 11019 / LMG 10263 / NCTC 9343 / Onslow / VPI 2553 / EN-2)).